We begin with the raw amino-acid sequence, 487 residues long: 3-octaprenyl-4-hydroxybenzoate carboxy-lyase (487 aa).

Asn-172 contacts Mn(2+). Prenylated FMN-binding positions include Ile-175 to Arg-177, Arg-189 to Leu-191, and Arg-194 to Gly-195. Mn(2+) is bound at residue Glu-238. The active-site Proton donor is Asp-287.

Belongs to the UbiD family. Homohexamer. The cofactor is prenylated FMN. Mn(2+) is required as a cofactor.

The protein resides in the cell membrane. The enzyme catalyses a 4-hydroxy-3-(all-trans-polyprenyl)benzoate + H(+) = a 2-(all-trans-polyprenyl)phenol + CO2. The protein operates within cofactor biosynthesis; ubiquinone biosynthesis. Functionally, catalyzes the decarboxylation of 3-octaprenyl-4-hydroxy benzoate to 2-octaprenylphenol, an intermediate step in ubiquinone biosynthesis. In Actinobacillus pleuropneumoniae serotype 7 (strain AP76), this protein is 3-octaprenyl-4-hydroxybenzoate carboxy-lyase.